A 380-amino-acid chain; its full sequence is MLRALARPLERCLGSRASGDGLLWQSELRPHAGGDYSIAVVQANSRLEDQSQVFTSSSATYVGVYDGHGGPEASRFVNRHLFPYMHKFAREHGGLSVDVIKKAFKETEEEFCGMVKRSLPMKPQMATVGSCCLVGAISNDTLYVANLGDSRAVLGSVVSGVDSNKGAVAERLSTDHNVAVEEVRKEVKALNPDDSQIVLYTRGVWRIKGIIQVSRSIGDVYLKKPEYYRDPIFQRHGNPIPLRRPAMTAEPSIIVRKLKPQDLFLIFASDGLWEHLSDETAVEIVLKHPRTGIARRLVRAALEEAAKKREMRYGDIKKIAKGIRRHFHDDISVIVVYLDQNKTSSSNSKLVKQGGITAPPDIYSLHSDEAEQRRLLNVLY.

The 304-residue stretch at 35–338 (DYSIAVVQAN…DDISVIVVYL (304 aa)) folds into the PPM-type phosphatase domain. Residues D66, G67, D270, and D329 each contribute to the Mn(2+) site.

It belongs to the PP2C family. Requires Mg(2+) as cofactor. It depends on Mn(2+) as a cofactor.

It carries out the reaction O-phospho-L-seryl-[protein] + H2O = L-seryl-[protein] + phosphate. The enzyme catalyses O-phospho-L-threonyl-[protein] + H2O = L-threonyl-[protein] + phosphate. Functionally, may dephosphorylate and repress plasma membrane H(+)-ATPases (PM H(+)-ATPases, e.g. AHA1 and AHA2), thus influencing negatively plant growth and fitness. This Arabidopsis thaliana (Mouse-ear cress) protein is Probable protein phosphatase 2C 63.